Reading from the N-terminus, the 309-residue chain is Probable manganese-dependent inorganic pyrophosphatase (309 aa).

Mn(2+)-binding residues include H9, D13, D15, D75, H97, and D149.

It belongs to the PPase class C family. It depends on Mn(2+) as a cofactor.

Its subcellular location is the cytoplasm. It catalyses the reaction diphosphate + H2O = 2 phosphate + H(+). This is Probable manganese-dependent inorganic pyrophosphatase from Staphylococcus aureus (strain COL).